Here is a 326-residue protein sequence, read N- to C-terminus: Tryptophan--tRNA ligase (326 aa).

ATP is bound by residues 11–13 (QPT) and 19–20 (GN). The 'HIGH' region signature appears at 12–20 (PTGQIHLGN). Residue aspartate 135 coordinates L-tryptophan. Residues 147 to 149 (GED), valine 186, and 195 to 199 (KMSKS) each bind ATP. The 'KMSKS' region signature appears at 195 to 199 (KMSKS).

It belongs to the class-I aminoacyl-tRNA synthetase family. As to quaternary structure, homodimer.

Its subcellular location is the cytoplasm. The catalysed reaction is tRNA(Trp) + L-tryptophan + ATP = L-tryptophyl-tRNA(Trp) + AMP + diphosphate + H(+). In terms of biological role, catalyzes the attachment of tryptophan to tRNA(Trp). The protein is Tryptophan--tRNA ligase of Helicobacter pylori (strain J99 / ATCC 700824) (Campylobacter pylori J99).